Reading from the N-terminus, the 328-residue chain is Fructose-1,6-bisphosphatase class 1 (328 aa).

Residues Glu89, Asp110, Leu112, and Asp113 each contribute to the Mg(2+) site. Residues Asn206, Tyr234, 252-254 (YLY), and Lys264 each bind substrate. Mg(2+) is bound at residue Glu270.

This sequence belongs to the FBPase class 1 family. As to quaternary structure, homotetramer. Requires Mg(2+) as cofactor.

The protein localises to the cytoplasm. It catalyses the reaction beta-D-fructose 1,6-bisphosphate + H2O = beta-D-fructose 6-phosphate + phosphate. Its pathway is carbohydrate biosynthesis; gluconeogenesis. The protein is Fructose-1,6-bisphosphatase class 1 of Wigglesworthia glossinidia brevipalpis.